The following is a 494-amino-acid chain: MAALSPTVRAALQSQAAGEEPWEQRFKRIMSTTLKNPGAFRSQPWFTRRDAILEAVLPSRTDPTHEKVLAVVNGLVQAKAVRADEGGAIYDALLQRVGRYNSSNVQSNLDHLVQDVREAVAMKAQEERGSMGSLVALNGFLSTLPSTVNHGQSDYVGFVGALRQLIAEVPQTLVYRTGPFYYFQTSRQGLQTVNLTKAFQNLSALWGVTTSAQTPMATAALLTPNTRLLLLLVAPFTDSRTVNGDTYLGHLLTLYREALRDARLDEITYSEIRDVARATGQDDSRALQSTLNFLVSQQTKRLPEDVFLTPQQTTVLRYLQKAIELQHAREPHERADRLLDAVVADLEPSFYSKHRHFITKLLDYFQRAAALNPHYFMSIVKNKHWTPPPGFYTGDFELPEVVHDSFQWDDTEDGAWSRPLAEQVNEEEPNTDYLAEYRSAFSDNREEKNQKKEWESLVDMMARWKTHRQSALDLDDEIEELSSTNPFKHLQPQF.

The tract at residues 1–101 (MAALSPTVRA…ALLQRVGRYN (101 aa)) is peripentonal hexon-tethering domain. The tract at residues 132 to 245 (GSLVALNGFL…FTDSRTVNGD (114 aa)) is binding to hexon-linking protein. At threonine 268 the chain carries Phosphothreonine; by host. A phosphoserine; by host mark is found at serine 439 and serine 456. Residues 484-494 (TNPFKHLQPQF) constitute a propeptide that is removed on maturation.

The protein belongs to the adenoviridae hexon-linking protein IIIa family. Interacts with hexon proteins; this interaction tethers the peripentonal hexons to hexons situated in the facet. Interacts with the penton protein (via N-terminus). Interacts with packaging protein 3; this interaction is required to promote correct genome packaging. Post-translationally, cleaved near the C-terminus by the viral protease during virion maturation to form the mature protein.

The protein localises to the virion. Its subcellular location is the host nucleus. Structural component of the virion that acts as a cement protein on the capsid exterior which mediates the interactions between the hexons, including the peripentonal hexons, and reaches all the way to the penton vertices. Two hexon linking proteins IIIa, one from each facet, stabilize the unique edge interface between a pair of facets. As the virus enters the host cell, hexon linking proteins IIIa are shed concomitant with virion acidification in the endosome. During virus assembly, seems to play a role in the serotype specificity of the packaging of viral DNA via its interaction with packaging protein 3. This Murine adenovirus A serotype 1 (MAdV-1) protein is Pre-hexon-linking protein IIIa.